The following is a 321-amino-acid chain: GDP-L-fucose synthase (321 aa).

Glycine 14–glycine 20 contributes to the NADP(+) binding site. The Proton donor/acceptor role is filled by tyrosine 143. Residues lysine 147, proline 170 to valine 173, and histidine 186 contribute to the NADP(+) site. The substrate site is built by lysine 194, tryptophan 208, arginine 215, and aspartate 277.

This sequence belongs to the NAD(P)-dependent epimerase/dehydratase family. Fucose synthase subfamily. As to quaternary structure, homodimer.

It carries out the reaction GDP-beta-L-fucose + NADP(+) = GDP-4-dehydro-alpha-D-rhamnose + NADPH + H(+). It participates in nucleotide-sugar biosynthesis; GDP-L-fucose biosynthesis via de novo pathway; GDP-L-fucose from GDP-alpha-D-mannose: step 2/2. Functionally, catalyzes the two-step NADP-dependent conversion of GDP-4-dehydro-6-deoxy-D-mannose to GDP-fucose, involving an epimerase and a reductase reaction. This is GDP-L-fucose synthase from Homo sapiens (Human).